The following is a 1895-amino-acid chain: 1,3-beta-glucan synthase component GSC2 (1895 aa).

Polar residues-rich tracts occupy residues methionine 1 to glycine 16 and proline 25 to serine 34. 2 disordered regions span residues methionine 1 to asparagine 143 and alanine 269 to leucine 292. At methionine 1–arginine 473 the chain is on the extracellular side. Residues glutamine 65–proline 78 show a composition bias toward low complexity. Composition is skewed to polar residues over residues tyrosine 79 to serine 107 and threonine 115 to tyrosine 141. Residues alanine 269–lysine 278 show a composition bias toward basic residues. A Glycyl lysine isopeptide (Lys-Gly) (interchain with G-Cter in ubiquitin) cross-link involves residue lysine 278. Threonine 288 and threonine 291 each carry phosphothreonine. A Glycyl lysine isopeptide (Lys-Gly) (interchain with G-Cter in ubiquitin) cross-link involves residue lysine 405. A helical transmembrane segment spans residues isoleucine 474 to tyrosine 494. At threonine 495 to lysine 511 the chain is on the cytoplasmic side. Residues tryptophan 512–cysteine 532 form a helical membrane-spanning segment. Residues glutamate 533–arginine 550 are Extracellular-facing. Residues phenylalanine 551–tyrosine 571 traverse the membrane as a helical segment. Residues aspartate 572–histidine 582 lie on the Cytoplasmic side of the membrane. The helical transmembrane segment at valine 583–proline 603 threads the bilayer. Residues leucine 604 to leucine 1579 lie on the Extracellular side of the membrane. Glycyl lysine isopeptide (Lys-Gly) (interchain with G-Cter in ubiquitin) cross-links involve residues lysine 929, lysine 934, lysine 1558, and lysine 1566. Residues isoleucine 1580–phenylalanine 1600 traverse the membrane as a helical segment. At isoleucine 1601–arginine 1620 the chain is on the cytoplasmic side. The helical transmembrane segment at isoleucine 1621–glycine 1641 threads the bilayer. Over leucine 1642 to glutamate 1758 the chain is Extracellular. A helical membrane pass occupies residues phenylalanine 1759–isoleucine 1779. The Cytoplasmic portion of the chain corresponds to proline 1780–serine 1821. The chain crosses the membrane as a helical span at residues leucine 1822–alanine 1842. Over histidine 1843–lysine 1895 the chain is Extracellular.

Belongs to the glycosyltransferase 48 family. In terms of assembly, component of the 1,3-beta-glucan synthase (GS) complex, composed of two alternate catalytic subunits FKS1 or GSC2, and a regulatory subunit RHO1. Interacts with SMK1.

It is found in the membrane. The enzyme catalyses [(1-&gt;3)-beta-D-glucosyl](n) + UDP-alpha-D-glucose = [(1-&gt;3)-beta-D-glucosyl](n+1) + UDP + H(+). Alternate catalytic subunit of the 1,3-beta-glucan synthase (GS) complex. Synthesizes 1,3-beta-glucan, a major structural component of the yeast cell wall. Required for spore wall assembly. Negative regulation of activity by SMK1 is important for spore wall deposition. Activity is positively regulated by RHO1. This is 1,3-beta-glucan synthase component GSC2 from Saccharomyces cerevisiae (strain ATCC 204508 / S288c) (Baker's yeast).